The following is a 341-amino-acid chain: MKALVKSKSQPGLWLEEIPEPAIGINDVLIRVLRTGICGTDVHIYKWDEWARETIHVPMAIGHEFVGRIEAVGSNVADFFPGDIVSGEGHVVCGRCRNCFAGRRHLCAKTMGVGVNRPGAFAEYIALPMTNIWRHHEGIDLDVAAIFDPFGNAVHTALSFPVLGEDVLITGAGPIGIMAAAVARHAAARYTVITDLNPYRLELAAKLGVTRAVNVREQKLGDVQKELGMTEGFDVGLEMSGNPAGFRDMLANMSHGAKIAMLGIPAGEMAIDWRTVIFNMLTIKGIYGREMYETWYKMSVMLQSGLDISPVITHRYHYTDFEKGFEVMSSGNSGKVILSWD.

Residue C38 coordinates Zn(2+). Active-site charge relay system residues include T40 and H43. Zn(2+)-binding residues include H63, E64, C93, C96, C99, and C107. Residues I175, D195, R200, 262–264 (LGI), and 286–287 (IY) contribute to the NAD(+) site.

It belongs to the zinc-containing alcohol dehydrogenase family. Homotetramer. The cofactor is Zn(2+).

It is found in the cytoplasm. It carries out the reaction L-threonine + NAD(+) = (2S)-2-amino-3-oxobutanoate + NADH + H(+). The protein operates within amino-acid degradation; L-threonine degradation via oxydo-reductase pathway; glycine from L-threonine: step 1/2. In terms of biological role, catalyzes the NAD(+)-dependent oxidation of L-threonine to 2-amino-3-ketobutyrate. This is L-threonine 3-dehydrogenase from Solibacter usitatus (strain Ellin6076).